We begin with the raw amino-acid sequence, 329 residues long: Ornithine carbamoyltransferase (329 aa).

Carbamoyl phosphate contacts are provided by residues 51 to 54 (STRT), glutamine 78, arginine 102, and 129 to 132 (HPVQ). Residues asparagine 174, aspartate 238, and 242–243 (SM) contribute to the L-ornithine site. Carbamoyl phosphate is bound by residues 278 to 279 (CL) and arginine 306.

This sequence belongs to the aspartate/ornithine carbamoyltransferase superfamily. OTCase family.

The protein localises to the cytoplasm. It catalyses the reaction carbamoyl phosphate + L-ornithine = L-citrulline + phosphate + H(+). The protein operates within amino-acid biosynthesis; L-arginine biosynthesis; L-arginine from L-ornithine and carbamoyl phosphate: step 1/3. Reversibly catalyzes the transfer of the carbamoyl group from carbamoyl phosphate (CP) to the N(epsilon) atom of ornithine (ORN) to produce L-citrulline. The polypeptide is Ornithine carbamoyltransferase (Helicobacter hepaticus (strain ATCC 51449 / 3B1)).